A 153-amino-acid polypeptide reads, in one-letter code: D-aminoacyl-tRNA deacylase (153 aa).

The Gly-cisPro motif, important for rejection of L-amino acids motif lies at 137–138; that stretch reads GP.

This sequence belongs to the DTD family. Homodimer.

The protein localises to the cytoplasm. The catalysed reaction is glycyl-tRNA(Ala) + H2O = tRNA(Ala) + glycine + H(+). It catalyses the reaction a D-aminoacyl-tRNA + H2O = a tRNA + a D-alpha-amino acid + H(+). An aminoacyl-tRNA editing enzyme that deacylates mischarged D-aminoacyl-tRNAs. Also deacylates mischarged glycyl-tRNA(Ala), protecting cells against glycine mischarging by AlaRS. Acts via tRNA-based rather than protein-based catalysis; rejects L-amino acids rather than detecting D-amino acids in the active site. By recycling D-aminoacyl-tRNA to D-amino acids and free tRNA molecules, this enzyme counteracts the toxicity associated with the formation of D-aminoacyl-tRNA entities in vivo and helps enforce protein L-homochirality. The protein is D-aminoacyl-tRNA deacylase of Methylococcus capsulatus (strain ATCC 33009 / NCIMB 11132 / Bath).